A 1292-amino-acid chain; its full sequence is HMG domain-containing protein 3 (1292 aa).

Positions 42–110 (TKKPRSAYLL…GLDPNSKLSA (69 aa)) form a DNA-binding region, HMG box. 3 disordered regions span residues 363 to 391 (SKGS…KLTL), 448 to 505 (VQPE…GRAR), and 562 to 588 (KQLG…NRTS). The span at 370–391 (RNQQPVTTEQNSSKENASKLTL) shows a compositional bias: polar residues. Positions 467-478 (PTPSEGTSTSSP) are enriched in low complexity. Positions 562–572 (KQLGQPIQQPS) are enriched in polar residues.

It localises to the nucleus. This Homo sapiens (Human) protein is HMG domain-containing protein 3.